The chain runs to 316 residues: Protoheme IX farnesyltransferase (316 aa).

The next 9 membrane-spanning stretches (helical) occupy residues 32–52 (VMSL…THVN), 53–73 (PIIG…SGAL), 98–118 (VARE…VITL), 120–140 (FVAN…YVVI), 153–173 (IVIG…AVAG), 180–200 (LALF…LALV), 226–246 (ILLY…IGFA), 251–271 (GLLS…VYLA), and 280–300 (VAMR…AAIV).

The protein belongs to the UbiA prenyltransferase family. Protoheme IX farnesyltransferase subfamily.

It is found in the cell inner membrane. The catalysed reaction is heme b + (2E,6E)-farnesyl diphosphate + H2O = Fe(II)-heme o + diphosphate. It functions in the pathway porphyrin-containing compound metabolism; heme O biosynthesis; heme O from protoheme: step 1/1. In terms of biological role, converts heme B (protoheme IX) to heme O by substitution of the vinyl group on carbon 2 of heme B porphyrin ring with a hydroxyethyl farnesyl side group. The chain is Protoheme IX farnesyltransferase from Methylocella silvestris (strain DSM 15510 / CIP 108128 / LMG 27833 / NCIMB 13906 / BL2).